The sequence spans 184 residues: Leucine-rich repeat-containing protein 20 (184 aa).

LRR repeat units lie at residues Gln-51 to Thr-72, Gln-75 to Leu-96, His-98 to Pro-120, Ala-121 to Ala-141, and Ala-145 to Leu-167. The residue at position 175 (Ser-175) is a Phosphoserine.

This Homo sapiens (Human) protein is Leucine-rich repeat-containing protein 20 (LRRC20).